The following is a 121-amino-acid chain: Probable intron-encoded DNA endonuclease aI1 (121 aa).

This sequence belongs to the LAGLIDADG endonuclease family.

The protein localises to the mitochondrion. Mitochondrial DNA endonuclease involved in intron homing. The protein is Probable intron-encoded DNA endonuclease aI1 (aI1) of Mycosarcoma maydis (Corn smut fungus).